The chain runs to 318 residues: AT-hook motif nuclear-localized protein 7 (318 aa).

Disordered regions lie at residues 1–76 (METS…PSSS) and 241–318 (SDQQ…LPVD). A Bipartite nuclear localization signal motif is present at residues 56–64 (KKRRGRPRK). Residues 56–68 (KKRRGRPRKYEAN) constitute a DNA-binding region (a.T hook). A PPC domain is found at 120–259 (GSNFTPHVIT…RKQRVEHAPA (140 aa)). Residues 243–256 (QQDHQKPRKQRVEH) are compositionally biased toward basic and acidic residues. Pro residues predominate over residues 264-274 (VPPPPSPPPPA). Over residues 288–312 (PPSSFGISSWTNGQDMPRNSATDIN) the composition is skewed to polar residues.

The protein localises to the nucleus. Functionally, transcription factor that specifically binds AT-rich DNA sequences related to the nuclear matrix attachment regions (MARs). This Arabidopsis thaliana (Mouse-ear cress) protein is AT-hook motif nuclear-localized protein 7.